Here is a 378-residue protein sequence, read N- to C-terminus: Heme chaperone HemW (378 aa).

Residues Met-1–Glu-237 enclose the Radical SAM core domain. Tyr-10 provides a ligand contact to S-adenosyl-L-methionine. [4Fe-4S] cluster is bound by residues Cys-16, Cys-20, and Cys-23. S-adenosyl-L-methionine is bound by residues Gly-66, Gly-67–Thr-68, Glu-99, Gln-126, Arg-138, and Asp-163.

It belongs to the anaerobic coproporphyrinogen-III oxidase family. HemW subfamily. In terms of assembly, binding of the [4Fe-4S] cofactor promotes dimerization. [4Fe-4S] cluster is required as a cofactor.

It localises to the cytoplasm. In terms of biological role, probably acts as a heme chaperone, transferring heme to the NarI subunit of the respiratory enzyme nitrate reductase; transfer may be stimulated by NADH. Binds one molecule of heme per monomer, possibly covalently. Heme binding is not affected by either [4Fe-4S] or S-adenosyl-L-methionine (SAM)-binding. Does not have coproporphyrinogen III dehydrogenase activity in vitro. Binds 1 [4Fe-4S] cluster. The cluster is coordinated with 3 cysteines and an exchangeable S-adenosyl-L-methionine. The chain is Heme chaperone HemW from Escherichia coli (strain K12).